Consider the following 468-residue polypeptide: uncharacterized protein (468 aa).

Positions 1–69 (MKKYQQLAEQ…PQSGYYVAPQ (69 aa)) constitute an HTH gntR-type domain. Position 312 is an N6-(pyridoxal phosphate)lysine (Lys312).

In the C-terminal section; belongs to the class-I pyridoxal-phosphate-dependent aminotransferase family.

This is an uncharacterized protein from Escherichia coli (strain K12).